Here is a 326-residue protein sequence, read N- to C-terminus: Nucleoporin NUP57 (326 aa).

Polar residues predominate over residues 1–10 (MFSSLNTRPA). The interval 1-52 (MFSSLNTRPAGQSLFGANTGGGLFGQSLANQPQQQQQPLQQQQQQAAPALGQ) is disordered. One copy of the SLFG repeat lies at 13-17 (SLFGA). One copy of the GLFG repeat lies at 22–25 (GLFG). The segment covering 25–52 (GQSLANQPQQQQQPLQQQQQQAAPALGQ) has biased composition (low complexity). Coiled coils occupy residues 218-239 (ALSG…TLND) and 280-321 (EEIE…HNPA).

It belongs to the nucleoporin GLFG family. Component of the nuclear pore complex (NPC). NPC constitutes the exclusive means of nucleocytoplasmic transport. NPCs allow the passive diffusion of ions and small molecules and the active, nuclear transport receptor-mediated bidirectional transport of macromolecules such as proteins, RNAs, ribonucleoparticles (RNPs), and ribosomal subunits across the nuclear envelope. Due to its 8-fold rotational symmetry, all subunits are present with 8 copies or multiples thereof.

It is found in the nucleus. It localises to the nuclear pore complex. The protein localises to the nucleus membrane. In terms of biological role, functions as a component of the nuclear pore complex (NPC). NPC components, collectively referred to as nucleoporins (NUPs), can play the role of both NPC structural components and of docking or interaction partners for transiently associated nuclear transport factors. Active directional transport is assured by both, a Phe-Gly (FG) repeat affinity gradient for these transport factors across the NPC and a transport cofactor concentration gradient across the nuclear envelope (GSP1 and GSP2 GTPases associated predominantly with GTP in the nucleus, with GDP in the cytoplasm). NUP57 plays an important role in several nuclear transport pathways including poly(A)+ RNA, tRNA, and pre-ribosome transport. This chain is Nucleoporin NUP57 (NUP57), found in Chaetomium thermophilum (strain DSM 1495 / CBS 144.50 / IMI 039719) (Thermochaetoides thermophila).